The following is a 333-amino-acid chain: Fe-S cluster assembly protein dre2 (333 aa).

The tract at residues 1-29 is disordered; sequence MSPITLDLTSDFNPANTTGAGSSSSQPRT. Residues 7–28 are compositionally biased toward polar residues; that stretch reads DLTSDFNPANTTGAGSSSSQPR. Positions 23 to 158 are N-terminal SAM-like domain; the sequence is SSSQPRTLLV…KPDYAEEEAV (136 aa). The segment at 159–225 is linker; it reads PLRFGLKRKT…EDTLLTEADL (67 aa). [2Fe-2S] cluster is bound by residues Cys-235, Cys-246, Cys-249, and Cys-251. Residues 235–251 are fe-S binding site A; that stretch reads CQPKPGKKRRACKDCTC. 4 residues coordinate [4Fe-4S] cluster: Cys-296, Cys-299, Cys-307, and Cys-310. 2 consecutive short sequence motifs (cx2C motif) follow at residues 296–299 and 307–310; these read CGSC and CAGC. The fe-S binding site B stretch occupies residues 296–310; it reads CGSCALGDAFRCAGC.

Belongs to the anamorsin family. In terms of assembly, monomer. Interacts with tah18. Interacts with mia40. It depends on [2Fe-2S] cluster as a cofactor. The cofactor is [4Fe-4S] cluster.

Its subcellular location is the cytoplasm. The protein localises to the mitochondrion intermembrane space. Component of the cytosolic iron-sulfur (Fe-S) protein assembly (CIA) machinery required for the maturation of extramitochondrial Fe-S proteins. Part of an electron transfer chain functioning in an early step of cytosolic Fe-S biogenesis, facilitating the de novo assembly of a [4Fe-4S] cluster on the scaffold complex cfd1-nbp35. Electrons are transferred to dre2 from NADPH via the FAD- and FMN-containing protein tah18. Tah18-dre2 are also required for the assembly of the diferric tyrosyl radical cofactor of ribonucleotide reductase (RNR), probably by providing electrons for reduction during radical cofactor maturation in the catalytic small subunit rnr2. In Neurospora crassa (strain ATCC 24698 / 74-OR23-1A / CBS 708.71 / DSM 1257 / FGSC 987), this protein is Fe-S cluster assembly protein dre2.